Here is a 484-residue protein sequence, read N- to C-terminus: tRNA sulfurtransferase (484 aa).

The region spanning Q63–R167 is the THUMP domain. Residues L185–I186, K267, G289, and Q298 contribute to the ATP site. C346 and C458 are disulfide-bonded. The Rhodanese domain maps to I406 to P484. Catalysis depends on C458, which acts as the Cysteine persulfide intermediate.

The protein belongs to the ThiI family.

It localises to the cytoplasm. The enzyme catalyses [ThiI sulfur-carrier protein]-S-sulfanyl-L-cysteine + a uridine in tRNA + 2 reduced [2Fe-2S]-[ferredoxin] + ATP + H(+) = [ThiI sulfur-carrier protein]-L-cysteine + a 4-thiouridine in tRNA + 2 oxidized [2Fe-2S]-[ferredoxin] + AMP + diphosphate. It carries out the reaction [ThiS sulfur-carrier protein]-C-terminal Gly-Gly-AMP + S-sulfanyl-L-cysteinyl-[cysteine desulfurase] + AH2 = [ThiS sulfur-carrier protein]-C-terminal-Gly-aminoethanethioate + L-cysteinyl-[cysteine desulfurase] + A + AMP + 2 H(+). It participates in cofactor biosynthesis; thiamine diphosphate biosynthesis. In terms of biological role, catalyzes the ATP-dependent transfer of a sulfur to tRNA to produce 4-thiouridine in position 8 of tRNAs, which functions as a near-UV photosensor. Also catalyzes the transfer of sulfur to the sulfur carrier protein ThiS, forming ThiS-thiocarboxylate. This is a step in the synthesis of thiazole, in the thiamine biosynthesis pathway. The sulfur is donated as persulfide by IscS. This Shewanella sp. (strain MR-7) protein is tRNA sulfurtransferase.